The sequence spans 66 residues: Large ribosomal subunit protein bL35 (66 aa).

Belongs to the bacterial ribosomal protein bL35 family.

The protein is Large ribosomal subunit protein bL35 of Cereibacter sphaeroides (strain ATCC 17029 / ATH 2.4.9) (Rhodobacter sphaeroides).